A 373-amino-acid polypeptide reads, in one-letter code: Type II secretion system protein L (373 aa).

The Cytoplasmic segment spans residues 1 to 214 (MTAWRDTLGR…RRSDPMQRWN (214 aa)). A helical transmembrane segment spans residues 215–233 (LLLAVAALVLLAVAGWLLL). Residues 234 to 373 (DNRRQAADDL…AKEAADAAQR (140 aa)) are Periplasmic-facing.

Belongs to the GSP L family. Type II secretion system is composed of four main components: the outer membrane complex, the inner membrane complex, the cytoplasmic secretion ATPase and the periplasm-spanning pseudopilus. Forms homodimers. Interacts with XpsM/GspM. Interacts with XpsE/GspE and XpsF/GspF.

The protein resides in the cell inner membrane. Its function is as follows. Inner membrane component of the type II secretion system required for the energy-dependent secretion of extracellular factors such as proteases and toxins from the periplasm. Plays a role in the complex assembly and recruits XpsM resulting in a stable complex in the inner membrane. Provides thus a link between the energy-providing XpsE protein in the cytoplasm and the rest of the T2SS machinery. This is Type II secretion system protein L (pefL) from Xanthomonas campestris pv. campestris (strain ATCC 33913 / DSM 3586 / NCPPB 528 / LMG 568 / P 25).